The sequence spans 511 residues: Alpha-amylase 2B (511 aa).

The N-terminal stretch at 1–15 (MKFFLLLFTIGFCWA) is a signal peptide. Q16 carries the post-translational modification Pyrrolidone carboxylic acid. 3 disulfide bridges follow: C43–C101, C85–C130, and C156–C175. Ca(2+) contacts are provided by N115, R173, and D182. R210 lines the chloride pocket. Residue D212 is the Nucleophile of the active site. H216 lines the Ca(2+) pocket. The active-site Proton donor is the E248. Chloride-binding residues include N313 and R352. Cystine bridges form between C393–C399 and C465–C477.

It belongs to the glycosyl hydrolase 13 family. In terms of assembly, monomer. It depends on Ca(2+) as a cofactor. Chloride is required as a cofactor.

The protein resides in the secreted. It carries out the reaction Endohydrolysis of (1-&gt;4)-alpha-D-glucosidic linkages in polysaccharides containing three or more (1-&gt;4)-alpha-linked D-glucose units.. The sequence is that of Alpha-amylase 2B (AMY2B) from Homo sapiens (Human).